Consider the following 149-residue polypeptide: Large ribosomal subunit protein uL15 (149 aa).

Composition is skewed to basic residues over residues 1–14 (MPTHLSKTRKHRGH) and 21–30 (RVGKHRKHPG). The disordered stretch occupies residues 1-42 (MPTHLSKTRKHRGHVSAGHGRVGKHRKHPGGRGLAGGQHHHR).

Belongs to the universal ribosomal protein uL15 family.

In Blumeria hordei (Barley powdery mildew), this protein is Large ribosomal subunit protein uL15.